The chain runs to 636 residues: Chaperone protein HtpG (636 aa).

Residues 1–344 (MTLEADKQTH…SADLSLNVSR (344 aa)) form an a; substrate-binding region. Residues 345 to 561 (EILQSGPVVD…EGDLGLQMRQ (217 aa)) are b. The segment at 562–636 (LLEASGQKVP…LNKLLLELSA (75 aa)) is c.

Belongs to the heat shock protein 90 family. As to quaternary structure, homodimer.

Its subcellular location is the cytoplasm. In terms of biological role, molecular chaperone. Has ATPase activity. This chain is Chaperone protein HtpG, found in Xylella fastidiosa (strain Temecula1 / ATCC 700964).